We begin with the raw amino-acid sequence, 276 residues long: Glutamate racemase (276 aa).

Residues Asp-12–Ser-13 and Tyr-44–Gly-45 each bind substrate. Cys-76 (proton donor/acceptor) is an active-site residue. Asn-77–Thr-78 is a binding site for substrate. The Proton donor/acceptor role is filled by Cys-187. Thr-188–His-189 provides a ligand contact to substrate.

It belongs to the aspartate/glutamate racemases family.

The enzyme catalyses L-glutamate = D-glutamate. The protein operates within cell wall biogenesis; peptidoglycan biosynthesis. Provides the (R)-glutamate required for cell wall biosynthesis. The sequence is that of Glutamate racemase from Granulibacter bethesdensis (strain ATCC BAA-1260 / CGDNIH1).